Reading from the N-terminus, the 201-residue chain is Recombination protein RecR (201 aa).

The segment at 60–75 (CSCCGNVDTIDPCTVC) adopts a C4-type zinc-finger fold. Positions 83 to 178 (SVIIVVEDVA…KITRLAHGVP (96 aa)) constitute a Toprim domain.

This sequence belongs to the RecR family.

Its function is as follows. May play a role in DNA repair. It seems to be involved in an RecBC-independent recombinational process of DNA repair. It may act with RecF and RecO. The polypeptide is Recombination protein RecR (Sinorhizobium fredii (strain NBRC 101917 / NGR234)).